The primary structure comprises 480 residues: Sensor histidine kinase CusS (480 aa).

Residues Met1 to Arg15 lie on the Cytoplasmic side of the membrane. The helical transmembrane segment at Leu16–Ile36 threads the bilayer. At His37–Lys186 the chain is on the periplasmic side. A helical transmembrane segment spans residues Leu187–His207. One can recognise an HAMP domain in the interval Lys208–Thr260. Over Lys208–Ala480 the chain is Cytoplasmic. The Histidine kinase domain maps to Asp268 to Ala480. Position 271 is a phosphohistidine; by autocatalysis (His271).

Autophosphorylated.

The protein localises to the cell inner membrane. It carries out the reaction ATP + protein L-histidine = ADP + protein N-phospho-L-histidine.. Member of the two-component regulatory system CusS/CusR involved in response to copper and silver. Acts as a copper/silver ion sensor. Activates CusR by phosphorylation. The chain is Sensor histidine kinase CusS (cusS) from Escherichia coli (strain K12).